Consider the following 338-residue polypeptide: Methionine synthase (338 aa).

The Zn(2+) site is built by His-210, Cys-212, Glu-234, and Cys-294.

It belongs to the archaeal MetE family. Zn(2+) serves as cofactor.

It participates in amino-acid biosynthesis; L-methionine biosynthesis via de novo pathway. In terms of biological role, catalyzes the transfer of a methyl group to L-homocysteine resulting in methionine formation. The physiological methyl donor is unknown. The protein is Methionine synthase of Pyrococcus abyssi (strain GE5 / Orsay).